The sequence spans 550 residues: Putative golgin subfamily A member 6-like protein 19 (550 aa).

Pro residues predominate over residues 1–11 (MWPQPRLPPHP). Positions 1–77 (MWPQPRLPPH…DSATGVYGEG (77 aa)) are disordered. The segment covering 51 to 62 (NGSSPDTATSGG) has biased composition (polar residues). Residues 157–405 (SKVEQLQDET…QERLRQQDER (249 aa)) are a coiled coil. The segment covering 467-480 (KELEKSGGAEEPRG) has biased composition (basic and acidic residues). The segment at 467–529 (KELEKSGGAE…VGTGEAAGGA (63 aa)) is disordered. Composition is skewed to low complexity over residues 484–499 (AAAA…PQGA) and 517–529 (GEAV…AGGA).

The protein belongs to the GOLGA6 family.

In Homo sapiens (Human), this protein is Putative golgin subfamily A member 6-like protein 19 (GOLGA6L19).